We begin with the raw amino-acid sequence, 265 residues long: Esterase claE (265 aa).

Active-site charge relay system residues include S121, D211, and H239.

Belongs to the LovG family.

The protein operates within secondary metabolite biosynthesis. Functionally, esterase; part of the cla gene cluster that produces clavatol and ortho-quinone methide. The clavatol biosynthesis cluster cla and the terrestric acid cluster tra are both involved in the production of peniphenones and penilactones. The non-reducing PKS claF is responsible for the formation of clavatol from successive condensations of 3 malonyl-CoA units, presumably with a simple acetyl-CoA starter unit, and 2 methylation steps. The esterase claE probably collaborates with claF by catalyzing the hydrolysis of ACP-bound acyl intermediates to free the ACP from stalled intermediates. The clavatol oxidase claD then converts clavatol to hydroxyclavatol. Spontaneous dehydration of hydroxyclavatol leads to the accumulation of the highly active ortho-quinone methide. On the other hand, the PKS-NRPS hybrid traA is involved in the formation of crustosic acid, with the help of traB and traD. The polyketide synthase module (PKS) of traA is responsible for the synthesis of the polyketide backbone via the condensation of an acetyl-CoA starter unit with 3 malonyl-CoA units. The downstream nonribosomal peptide synthetase (NRPS) module then amidates the carboxyl end of the polyketide with L-malic acid. Because traA lacks a designated enoylreductase (ER) domain, the required activity is provided the enoyl reductase traG. Crustosic acid undergoes decarboxylation and isomerization to the terrestric acid, catalyzed by the 2-oxoglutarate-dependent dioxygenase traH. Both acids are further converted to the 2 gamma-butyrolactones (R)-5-methyltetronic acid and (S)-5-carboxylmethyltetronic acid, with involvement of the cytochrome P450 monooxygenase claJ. Spontaneous addition of the methide to these gamma-butyrolactones leads to peniphenone D and penilactone D, which undergo again stereospecific attacking by methide to give penilactones A and B. The polypeptide is Esterase claE (Penicillium crustosum (Blue mold fungus)).